The primary structure comprises 451 residues: Portal protein (451 aa).

It belongs to the SPP1-like portal protein family. As to quaternary structure, homododecamer.

It is found in the virion. Its function is as follows. Forms the portal vertex of the capsid. This portal plays critical roles in head assembly, genome packaging, neck/tail attachment, and genome ejection. The portal protein multimerizes as a single ring-shaped homododecamer arranged around a central channel. Binds to the terminase subunits to form the packaging machine. This chain is Portal protein, found in Clostridium phage phiCD119 (strain Clostridium difficile/United States/Govind/2006) (Bacteriophage phiCD119).